The sequence spans 558 residues: Dihydroxy-acid dehydratase (558 aa).

D81 lines the Mg(2+) pocket. [2Fe-2S] cluster is bound at residue C122. Residues D123 and K124 each coordinate Mg(2+). At K124 the chain carries N6-carboxylysine. C195 serves as a coordination point for [2Fe-2S] cluster. E447 is a binding site for Mg(2+). Residue S473 is the Proton acceptor of the active site.

This sequence belongs to the IlvD/Edd family. Homodimer. The cofactor is [2Fe-2S] cluster. Mg(2+) is required as a cofactor.

It carries out the reaction (2R)-2,3-dihydroxy-3-methylbutanoate = 3-methyl-2-oxobutanoate + H2O. It catalyses the reaction (2R,3R)-2,3-dihydroxy-3-methylpentanoate = (S)-3-methyl-2-oxopentanoate + H2O. It participates in amino-acid biosynthesis; L-isoleucine biosynthesis; L-isoleucine from 2-oxobutanoate: step 3/4. Its pathway is amino-acid biosynthesis; L-valine biosynthesis; L-valine from pyruvate: step 3/4. Its function is as follows. Functions in the biosynthesis of branched-chain amino acids. Catalyzes the dehydration of (2R,3R)-2,3-dihydroxy-3-methylpentanoate (2,3-dihydroxy-3-methylvalerate) into 2-oxo-3-methylpentanoate (2-oxo-3-methylvalerate) and of (2R)-2,3-dihydroxy-3-methylbutanoate (2,3-dihydroxyisovalerate) into 2-oxo-3-methylbutanoate (2-oxoisovalerate), the penultimate precursor to L-isoleucine and L-valine, respectively. This is Dihydroxy-acid dehydratase from Bacillus velezensis (strain DSM 23117 / BGSC 10A6 / LMG 26770 / FZB42) (Bacillus amyloliquefaciens subsp. plantarum).